Here is a 433-residue protein sequence, read N- to C-terminus: E1B 55 kDa protein (433 aa).

Belongs to the adenoviridae E1B 55 kDa protein family. Interacts with host PML-4 and PML-5; this interaction promotes efficient subnuclear targeting of E1B-55K to PML nuclear bodies. Interacts with E4-ORF3 protein. Interacts with E4-ORF6 protein.

It is found in the host nucleus. It localises to the host cytoplasm. Functionally, plays a major role to prevent cellular inhibition of viral genome replication. Assembles an SCF-like E3 ubiquitin ligase complex based on the cellular proteins ELOB, ELOC, CUL5 and RBX1, in cooperation with viral E4orf6. This viral RING-type ligase ubiquitinates cellular substrates and targets them to proteasomal degradation: TP53/p53, LIG4, MRE11-RAD50-NBS1 (MRN) complex, ITGA3, DAXX and BLM. E1B-55K probably acts as the substrate-specific adapter of the SCF-like E3 ubiquitin ligase complex. Degradation of host TP53/p53 activity is essential for preventing E1A-induced TP53 accumulation that would otherwise lead to cell apoptosis and growth arrest. E1B-55K also inactivates TP53 transcription-factor activity by binding its transactivation domain. E1B-55K also functions as a SUMO1 E3 ligase for TP53 which causes the latter to be sequestered in promyelocytic leukemia (PML) nuclear bodies thereby contributing to maximal inhibition of TP53 function. This chain is E1B 55 kDa protein, found in Murine adenovirus A serotype 1 (MAdV-1).